Consider the following 570-residue polypeptide: Proline--tRNA ligase (570 aa).

This sequence belongs to the class-II aminoacyl-tRNA synthetase family. ProS type 1 subfamily. As to quaternary structure, homodimer.

The protein resides in the cytoplasm. It catalyses the reaction tRNA(Pro) + L-proline + ATP = L-prolyl-tRNA(Pro) + AMP + diphosphate. In terms of biological role, catalyzes the attachment of proline to tRNA(Pro) in a two-step reaction: proline is first activated by ATP to form Pro-AMP and then transferred to the acceptor end of tRNA(Pro). As ProRS can inadvertently accommodate and process non-cognate amino acids such as alanine and cysteine, to avoid such errors it has two additional distinct editing activities against alanine. One activity is designated as 'pretransfer' editing and involves the tRNA(Pro)-independent hydrolysis of activated Ala-AMP. The other activity is designated 'posttransfer' editing and involves deacylation of mischarged Ala-tRNA(Pro). The misacylated Cys-tRNA(Pro) is not edited by ProRS. The protein is Proline--tRNA ligase of Geotalea daltonii (strain DSM 22248 / JCM 15807 / FRC-32) (Geobacter daltonii).